The chain runs to 275 residues: Thiazole synthase (275 aa).

The active-site Schiff-base intermediate with DXP is K108. Residues G169, 196 to 197 (AG), and 218 to 219 (NT) contribute to the 1-deoxy-D-xylulose 5-phosphate site.

This sequence belongs to the ThiG family. In terms of assembly, homotetramer. Forms heterodimers with either ThiH or ThiS.

Its subcellular location is the cytoplasm. It catalyses the reaction [ThiS sulfur-carrier protein]-C-terminal-Gly-aminoethanethioate + 2-iminoacetate + 1-deoxy-D-xylulose 5-phosphate = [ThiS sulfur-carrier protein]-C-terminal Gly-Gly + 2-[(2R,5Z)-2-carboxy-4-methylthiazol-5(2H)-ylidene]ethyl phosphate + 2 H2O + H(+). It functions in the pathway cofactor biosynthesis; thiamine diphosphate biosynthesis. In terms of biological role, catalyzes the rearrangement of 1-deoxy-D-xylulose 5-phosphate (DXP) to produce the thiazole phosphate moiety of thiamine. Sulfur is provided by the thiocarboxylate moiety of the carrier protein ThiS. In vitro, sulfur can be provided by H(2)S. This chain is Thiazole synthase, found in Ralstonia pickettii (strain 12J).